Consider the following 356-residue polypeptide: S-adenosylmethionine:tRNA ribosyltransferase-isomerase (356 aa).

This sequence belongs to the QueA family. As to quaternary structure, monomer.

It is found in the cytoplasm. It carries out the reaction 7-aminomethyl-7-carbaguanosine(34) in tRNA + S-adenosyl-L-methionine = epoxyqueuosine(34) in tRNA + adenine + L-methionine + 2 H(+). It participates in tRNA modification; tRNA-queuosine biosynthesis. Transfers and isomerizes the ribose moiety from AdoMet to the 7-aminomethyl group of 7-deazaguanine (preQ1-tRNA) to give epoxyqueuosine (oQ-tRNA). This Chromohalobacter salexigens (strain ATCC BAA-138 / DSM 3043 / CIP 106854 / NCIMB 13768 / 1H11) protein is S-adenosylmethionine:tRNA ribosyltransferase-isomerase.